A 683-amino-acid chain; its full sequence is Methionine--tRNA ligase (683 aa).

The 'HIGH' region signature appears at 23-33 (PYANGSAHIGH). 4 residues coordinate Zn(2+): cysteine 154, cysteine 157, cysteine 166, and cysteine 170. The short motif at 335-339 (KFSKS) is the 'KMSKS' region element. Lysine 338 contacts ATP. A tRNA-binding domain is found at 583-683 (DFAKMELRVG…KPSEPGTKVR (101 aa)).

Belongs to the class-I aminoacyl-tRNA synthetase family. MetG type 1 subfamily. As to quaternary structure, homodimer. Requires Zn(2+) as cofactor.

It is found in the cytoplasm. The enzyme catalyses tRNA(Met) + L-methionine + ATP = L-methionyl-tRNA(Met) + AMP + diphosphate. In terms of biological role, is required not only for elongation of protein synthesis but also for the initiation of all mRNA translation through initiator tRNA(fMet) aminoacylation. In Methanocella arvoryzae (strain DSM 22066 / NBRC 105507 / MRE50), this protein is Methionine--tRNA ligase.